Here is a 346-residue protein sequence, read N- to C-terminus: Phosphate acyltransferase (346 aa).

Belongs to the PlsX family. As to quaternary structure, homodimer. Probably interacts with PlsY.

It localises to the cytoplasm. The catalysed reaction is a fatty acyl-[ACP] + phosphate = an acyl phosphate + holo-[ACP]. It functions in the pathway lipid metabolism; phospholipid metabolism. Its function is as follows. Catalyzes the reversible formation of acyl-phosphate (acyl-PO(4)) from acyl-[acyl-carrier-protein] (acyl-ACP). This enzyme utilizes acyl-ACP as fatty acyl donor, but not acyl-CoA. The polypeptide is Phosphate acyltransferase (Deinococcus geothermalis (strain DSM 11300 / CIP 105573 / AG-3a)).